Consider the following 375-residue polypeptide: Kininogen (375 aa).

Positions 1–23 (MKLGVRLCVLVVFSLQLWGPGQG) are cleaved as a signal peptide. 2 consecutive Cystatin kininogen-type domains span residues 35–139 (CDDK…VEAP) and 156–260 (VESE…GPLD). An N-linked (GlcNAc) asparagine glycan is attached at Asn-74. Cystine bridges form between Cys-91–Cys-102, Cys-115–Cys-133, Cys-211–Cys-223, and Cys-234–Cys-254. Asn-235 is a glycosylation site (N-linked (GlcNAc) asparagine). The interval 283–375 (EVKTTQASTA…LSDLDLLGKK (93 aa)) is disordered.

Post-translationally, N-glycosylated, with sialylated biantennary complex-type glycans. O-glycosylated, sialylated oligosaccharides. In terms of processing, bradykinin is released from kininogen by kallikrein. Post-translationally, the N-terminus is blocked. Expressed in the skin, liver, intestine, spleen, pancreas and kidney.

It is found in the cytoplasm. The protein localises to the vacuole. In terms of biological role, inhibits papain and ficin (cysteine proteinases) but not trypsin (a serine proteinase). The chain is Kininogen (LOC106584303) from Salmo salar (Atlantic salmon).